Here is a 1778-residue protein sequence, read N- to C-terminus: Ankyrin repeat domain-containing protein 36C (1778 aa).

5 ANK repeats span residues 64-93 (KERT…ELNL), 97-126 (EDRT…DPNI), 130-159 (FGRT…NIEE), 163-192 (DEYP…NINA), and 196-225 (LGRS…DVFS). 5 disordered regions span residues 260-365 (LSIN…DEQK), 501-526 (ALPA…VKDS), 538-653 (DSLT…QKQS), 671-1027 (RITG…QKQL), and 1051-1072 (IRGT…EKDS). Composition is skewed to polar residues over residues 261–272 (SINSNPVSSQKQ) and 297–306 (KSGTVSSQKQ). Residues 539–555 (SLTSSEESSERPPLSTL) show a composition bias toward low complexity. Composition is skewed to basic and acidic residues over residues 585–596 (PAEKATSDDKDS) and 619–630 (PAEKATSDEKDS). Composition is skewed to polar residues over residues 631-653 (VSNI…QKQS) and 679-691 (GTVS…PSKA). A compositionally biased stretch (basic and acidic residues) spans 794 to 813 (TSDEKDSFSNITREKKDGEI). Residue Ser829 is modified to Phosphoserine. Composition is skewed to basic and acidic residues over residues 840-849 (RGKEDGEKTR) and 862-881 (TSDE…DGET). Ser897 bears the Phosphoserine mark. The span at 907–917 (AREKKDGEKSR) shows a compositional bias: basic and acidic residues. Residues 942–955 (RGKKHGEKTRRVSS) show a composition bias toward basic residues. Polar residues-rich tracts occupy residues 983–992 (ISGTVSSQKQ) and 1005–1026 (VSNI…SQKQ). Coiled-coil stretches lie at residues 1157–1187 (EQDL…QIHS), 1247–1333 (ELKD…YRIE), 1362–1480 (SETD…DHDQ), and 1544–1768 (VFEH…ILQH).

This sequence belongs to the ANKRD36 family.

The polypeptide is Ankyrin repeat domain-containing protein 36C (ANKRD36C) (Homo sapiens (Human)).